A 532-amino-acid chain; its full sequence is Phosphoenolpyruvate carboxykinase (ATP) (532 aa).

Substrate is bound by residues Arg60, Tyr194, and Lys200. ATP-binding positions include Lys200, His219, and 237–245 (GLSGTGKTT). Positions 200 and 219 each coordinate Mn(2+). Asp258 is a binding site for Mn(2+). ATP contacts are provided by Glu286, Arg324, and Thr449. Arg324 contacts substrate.

The protein belongs to the phosphoenolpyruvate carboxykinase (ATP) family. The cofactor is Mn(2+).

The protein resides in the cytoplasm. The catalysed reaction is oxaloacetate + ATP = phosphoenolpyruvate + ADP + CO2. It functions in the pathway carbohydrate biosynthesis; gluconeogenesis. Involved in the gluconeogenesis. Catalyzes the conversion of oxaloacetate (OAA) to phosphoenolpyruvate (PEP) through direct phosphoryl transfer between the nucleoside triphosphate and OAA. The chain is Phosphoenolpyruvate carboxykinase (ATP) from Cereibacter sphaeroides (strain ATCC 17025 / ATH 2.4.3) (Rhodobacter sphaeroides).